The following is a 309-amino-acid chain: MPVYNKEELVRFVEEAKQYARYGKVADYIPALGKANPNELSIAVYTADGKVVDAGDVTVKVTLQSISKILALALVLIDRGEDEVFRKVGMEPTGDPFNSIAKLEEVQPSKPLNPMINAGALAVTHMIRGRSVEERLERLLAFIRRLAGNEQITYSEEVAQSEFETAFLNRSLCYFLKQHGIIDEDVEELMDLYTKQCAVEMTCIDLARIGLVFALDGRDPHSGELLMPLDVARICKTFMVTCGMYNASGEFAIKIGIPAKSGVSGGILAAVPGRCGIGIFGPALDDKGNSLTGVKLLERLSKTYSLSIF.

Substrate is bound by residues S65, N117, E162, N169, Y193, Y245, and V263.

It belongs to the glutaminase family. In terms of assembly, homotetramer.

It catalyses the reaction L-glutamine + H2O = L-glutamate + NH4(+). In Geobacillus thermodenitrificans (strain NG80-2), this protein is Glutaminase.